A 363-amino-acid polypeptide reads, in one-letter code: Dihydroorotate dehydrogenase (quinone) (363 aa).

FMN is bound by residues 67–71 (AGYDK) and Thr91. A substrate-binding site is contributed by Lys71. 116–120 (NRMGF) is a binding site for substrate. Residues Asn145 and Asn178 each contribute to the FMN site. A substrate-binding site is contributed by Asn178. The active-site Nucleophile is the Ser181. Residue Asn183 participates in substrate binding. FMN-binding residues include Lys224 and Thr254. Position 255 to 256 (255 to 256 (NT)) interacts with substrate. FMN-binding positions include Gly275, Gly304, and 325 to 326 (YS).

This sequence belongs to the dihydroorotate dehydrogenase family. Type 2 subfamily. As to quaternary structure, monomer. It depends on FMN as a cofactor.

It is found in the cell membrane. It carries out the reaction (S)-dihydroorotate + a quinone = orotate + a quinol. The protein operates within pyrimidine metabolism; UMP biosynthesis via de novo pathway; orotate from (S)-dihydroorotate (quinone route): step 1/1. In terms of biological role, catalyzes the conversion of dihydroorotate to orotate with quinone as electron acceptor. This is Dihydroorotate dehydrogenase (quinone) from Acidithiobacillus ferrooxidans (strain ATCC 23270 / DSM 14882 / CIP 104768 / NCIMB 8455) (Ferrobacillus ferrooxidans (strain ATCC 23270)).